Here is a 234-residue protein sequence, read N- to C-terminus: ATP-dependent dethiobiotin synthetase BioD (234 aa).

12-17 (DVGKTF) is an ATP binding site. Thr-16 lines the Mg(2+) pocket. Lys-37 is a catalytic residue. A substrate-binding site is contributed by Ser-41. Residues Asp-52, 118–121 (EGAG), and 178–179 (SQ) contribute to the ATP site. Asp-52 and Glu-118 together coordinate Mg(2+).

The protein belongs to the dethiobiotin synthetase family. Homodimer. The cofactor is Mg(2+).

Its subcellular location is the cytoplasm. It catalyses the reaction (7R,8S)-7,8-diammoniononanoate + CO2 + ATP = (4R,5S)-dethiobiotin + ADP + phosphate + 3 H(+). It functions in the pathway cofactor biosynthesis; biotin biosynthesis; biotin from 7,8-diaminononanoate: step 1/2. In terms of biological role, catalyzes a mechanistically unusual reaction, the ATP-dependent insertion of CO2 between the N7 and N8 nitrogen atoms of 7,8-diaminopelargonic acid (DAPA, also called 7,8-diammoniononanoate) to form a ureido ring. This chain is ATP-dependent dethiobiotin synthetase BioD, found in Phenylobacterium zucineum (strain HLK1).